Here is a 204-residue protein sequence, read N- to C-terminus: Guanylate kinase (204 aa).

In terms of domain architecture, Guanylate kinase-like spans 18–196; the sequence is PKLFTISAPA…SYEILKSIFI (179 aa). 25 to 32 is a binding site for ATP; sequence APAGAGKT.

Belongs to the guanylate kinase family.

The protein localises to the cytoplasm. It carries out the reaction GMP + ATP = GDP + ADP. Functionally, essential for recycling GMP and indirectly, cGMP. The sequence is that of Guanylate kinase from Chlamydia felis (strain Fe/C-56) (Chlamydophila felis).